The chain runs to 161 residues: Transcription antitermination protein NusB (161 aa).

The protein belongs to the NusB family.

Involved in transcription antitermination. Required for transcription of ribosomal RNA (rRNA) genes. Binds specifically to the boxA antiterminator sequence of the ribosomal RNA (rrn) operons. In Syntrophus aciditrophicus (strain SB), this protein is Transcription antitermination protein NusB.